The primary structure comprises 872 residues: Leucine--tRNA ligase (872 aa).

Residues 42-52 (PYPSGSLHMGH) carry the 'HIGH' region motif. Residues 634 to 638 (TMSKS) carry the 'KMSKS' region motif. K637 contacts ATP.

Belongs to the class-I aminoacyl-tRNA synthetase family.

The protein localises to the cytoplasm. It carries out the reaction tRNA(Leu) + L-leucine + ATP = L-leucyl-tRNA(Leu) + AMP + diphosphate. The protein is Leucine--tRNA ligase of Nostoc sp. (strain PCC 7120 / SAG 25.82 / UTEX 2576).